The following is a 526-amino-acid chain: Amine oxidase [flavin-containing] A (526 aa).

Position 1 is an N-acetylmethionine (methionine 1). Topologically, residues 1–497 are cytoplasmic; the sequence is MTDLEKPNLA…HTFLERNLPS (497 aa). Serine 383 carries the post-translational modification Phosphoserine. Cysteine 406 bears the S-8alpha-FAD cysteine mark. Residues 498 to 518 form a helical; Anchor for type IV membrane protein membrane-spanning segment; it reads VPGLLKITGVSTSVALLCFVL. The Mitochondrial intermembrane portion of the chain corresponds to 519–526; sequence YKIKKLPC. Residues 520–522 are interaction with membrane phospholipid headgroups; that stretch reads KIK.

The protein belongs to the flavin monoamine oxidase family. Monomer, homo- or heterodimer (containing two subunits of similar size). Each subunit contains a covalently bound flavin. Enzymatically active as monomer. FAD serves as cofactor.

The protein resides in the mitochondrion outer membrane. The enzyme catalyses a secondary aliphatic amine + O2 + H2O = a primary amine + an aldehyde + H2O2. It carries out the reaction a primary methyl amine + O2 + H2O = an aldehyde + H2O2 + NH4(+). The catalysed reaction is (R)-adrenaline + O2 + H2O = (R)-3,4-dihydroxymandelaldehyde + methylamine + H2O2. It catalyses the reaction dopamine + O2 + H2O = 3,4-dihydroxyphenylacetaldehyde + H2O2 + NH4(+). The enzyme catalyses tyramine + O2 + H2O = (4-hydroxyphenyl)acetaldehyde + H2O2 + NH4(+). It carries out the reaction (R)-noradrenaline + O2 + H2O = (R)-3,4-dihydroxymandelaldehyde + H2O2 + NH4(+). The catalysed reaction is serotonin + O2 + H2O = (5-hydroxyindol-3-yl)acetaldehyde + H2O2 + NH4(+). It catalyses the reaction kynuramine + O2 + H2O = 3-(2-aminophenyl)-3-oxopropanal + H2O2 + NH4(+). The enzyme catalyses tryptamine + O2 + H2O = indole-3-acetaldehyde + H2O2 + NH4(+). It carries out the reaction 2-phenylethylamine + O2 + H2O = 2-phenylacetaldehyde + H2O2 + NH4(+). Its function is as follows. Catalyzes the oxidative deamination of primary and some secondary amine such as neurotransmitters, with concomitant reduction of oxygen to hydrogen peroxide and has important functions in the metabolism of neuroactive and vasoactive amines in the central nervous system and peripheral tissues. Preferentially oxidizes serotonin. Also catalyzes the oxidative deamination of kynuramine to 3-(2-aminophenyl)-3-oxopropanal that can spontaneously condense to 4-hydroxyquinoline. This chain is Amine oxidase [flavin-containing] A, found in Rattus norvegicus (Rat).